The sequence spans 155 residues: 6,7-dimethyl-8-ribityllumazine synthase (155 aa).

5-amino-6-(D-ribitylamino)uracil is bound by residues W18, 52–54 (AFE), and 76–78 (LVV). The Proton donor role is filled by R84. 5-amino-6-(D-ribitylamino)uracil is bound at residue S109. Position 123 (H123) interacts with (2S)-2-hydroxy-3-oxobutyl phosphate.

The protein belongs to the DMRL synthase family.

The enzyme catalyses (2S)-2-hydroxy-3-oxobutyl phosphate + 5-amino-6-(D-ribitylamino)uracil = 6,7-dimethyl-8-(1-D-ribityl)lumazine + phosphate + 2 H2O + H(+). Its pathway is cofactor biosynthesis; riboflavin biosynthesis; riboflavin from 2-hydroxy-3-oxobutyl phosphate and 5-amino-6-(D-ribitylamino)uracil: step 1/2. In terms of biological role, catalyzes the formation of 6,7-dimethyl-8-ribityllumazine by condensation of 5-amino-6-(D-ribitylamino)uracil with 3,4-dihydroxy-2-butanone 4-phosphate. This is the penultimate step in the biosynthesis of riboflavin. This Rhodococcus erythropolis (Arthrobacter picolinophilus) protein is 6,7-dimethyl-8-ribityllumazine synthase.